The following is a 485-amino-acid chain: NADH-quinone oxidoreductase subunit N (485 aa).

Transmembrane regions (helical) follow at residues 8-28, 35-55, 71-91, 105-125, 127-147, 159-179, 203-223, 235-255, 271-291, 297-317, 326-346, 373-393, 408-430, and 455-475; these read LIAL…MLSI, FLNA…LWFV, GFAM…CTFA, FYLL…ANHL, ALFL…GYAF, YTIL…LVYA, LLAG…LVPF, PAPV…GVVM, VVLG…ALSQ, LLGY…IVLQ, VGVY…VVSL, AAVM…LGFI, WWLV…RVAV, and IVVL…QPLI.

Belongs to the complex I subunit 2 family. NDH-1 is composed of 13 different subunits. Subunits NuoA, H, J, K, L, M, N constitute the membrane sector of the complex.

The protein resides in the cell inner membrane. The catalysed reaction is a quinone + NADH + 5 H(+)(in) = a quinol + NAD(+) + 4 H(+)(out). NDH-1 shuttles electrons from NADH, via FMN and iron-sulfur (Fe-S) centers, to quinones in the respiratory chain. The immediate electron acceptor for the enzyme in this species is believed to be ubiquinone. Couples the redox reaction to proton translocation (for every two electrons transferred, four hydrogen ions are translocated across the cytoplasmic membrane), and thus conserves the redox energy in a proton gradient. The sequence is that of NADH-quinone oxidoreductase subunit N from Salmonella choleraesuis (strain SC-B67).